The primary structure comprises 1236 residues: Chitinase-like protein PB1E7.04c (1236 aa).

The signal sequence occupies residues 1–19 (MRLISSLLLLVYSARLALS). Residues asparagine 21, asparagine 24, asparagine 54, asparagine 123, asparagine 225, asparagine 237, asparagine 255, asparagine 267, asparagine 277, asparagine 288, and asparagine 309 are each glycosylated (N-linked (GlcNAc...) asparagine). In terms of domain architecture, GH18 spans 26–325 (TAVLGYWGSN…EAIHKILDTK (300 aa)). Disordered regions lie at residues 326-367 (SKHS…TSSA), 449-497 (VSSI…QSTL), and 584-625 (TSSP…STIL). Positions 339–351 (QGLESTSSIALNP) are enriched in polar residues. Residues 352–367 (TSSISSTSSSSSTSSA) show a composition bias toward low complexity. 5 N-linked (GlcNAc...) asparagine glycosylation sites follow: asparagine 715, asparagine 737, asparagine 768, asparagine 786, and asparagine 813. Disordered stretches follow at residues 804–836 (ISTSSTNEYNTSFHAPTVSSTTSSSSTTSLAAN), 868–927 (TTAL…TSSS), 946–979 (TPTSSSSASSWSSSSEVDPSTAASATGSSTSSIA), and 1125–1159 (AASGSSTVTSSATASSSSSAATTADSSVTTDTPSN). A compositionally biased stretch (polar residues) spans 810–821 (NEYNTSFHAPTV). Over residues 822–832 (SSTTSSSSTTS) the composition is skewed to low complexity. A compositionally biased stretch (low complexity) spans 1125–1156 (AASGSSTVTSSATASSSSSAATTADSSVTTDT).

This sequence belongs to the glycosyl hydrolase 18 family. Chitinase class III subfamily.

The protein resides in the secreted. In Schizosaccharomyces pombe (strain 972 / ATCC 24843) (Fission yeast), this protein is Chitinase-like protein PB1E7.04c.